An 885-amino-acid chain; its full sequence is Translation initiation factor IF-2 (885 aa).

Disordered regions lie at residues 55–150 and 269–300; these read IPDK…ADVT and NTIN…EAVT. Residues 65-146 show a composition bias toward basic and acidic residues; it reads EPKAKKEPKK…AEAPKPKESL (82 aa). The segment covering 281–290 has biased composition (basic residues); sequence RRARKKHKKP. In terms of domain architecture, tr-type G spans 384–553; it reads PRAPVITIMG…LLQADLLELK (170 aa). Residues 393 to 400 are G1; it reads GHVDHGKT. GTP is bound at residue 393 to 400; sequence GHVDHGKT. Residues 418 to 422 are G2; that stretch reads GITQH. The segment at 439-442 is G3; the sequence is DTPG. Residues 439 to 443 and 493 to 496 contribute to the GTP site; these read DTPGH and NKMD. Positions 493-496 are G4; it reads NKMD. Residues 529–531 form a G5 region; that stretch reads SAK.

It belongs to the TRAFAC class translation factor GTPase superfamily. Classic translation factor GTPase family. IF-2 subfamily.

It is found in the cytoplasm. Its function is as follows. One of the essential components for the initiation of protein synthesis. Protects formylmethionyl-tRNA from spontaneous hydrolysis and promotes its binding to the 30S ribosomal subunits. Also involved in the hydrolysis of GTP during the formation of the 70S ribosomal complex. This chain is Translation initiation factor IF-2, found in Campylobacter concisus (strain 13826).